Here is a 248-residue protein sequence, read N- to C-terminus: DNA/RNA-binding protein ALBA1 (248 aa).

A disordered region spans residues 217–248; that stretch reads GRDGGYRGGNRGGSRSGFRGGRGGFRGGRALS. The span at 222-248 shows a compositional bias: gly residues; sequence YRGGNRGGSRSGFRGGRGGFRGGRALS.

It belongs to the histone-like Alba family. May form homodimers. Identified in a TARE6-associated complex consisting of over 30 proteins and including ALBA1, ALBA2 and ALBA4; the complex binds to the non-coding subtelomeric repeat region TARE6.

It localises to the nucleus. The protein resides in the chromosome. The protein localises to the telomere. Its subcellular location is the cytoplasm. Possesses DNA- and RNA-binding activities. During the asexual blood stages binds to a sub-population of mature mRNAs and regulates the timing of their translation. Binds to DNA with relaxed sequence specificity. Associates with the subtelomeric TARE6 repeats. In Plasmodium falciparum (isolate 3D7), this protein is DNA/RNA-binding protein ALBA1.